The primary structure comprises 443 residues: Tol-Pal system protein TolB (443 aa).

An N-terminal signal peptide occupies residues 1 to 33 (MKIGIINTKIRTVFSAFACMIAASLVCTMPARA).

The protein belongs to the TolB family. In terms of assembly, the Tol-Pal system is composed of five core proteins: the inner membrane proteins TolA, TolQ and TolR, the periplasmic protein TolB and the outer membrane protein Pal. They form a network linking the inner and outer membranes and the peptidoglycan layer.

It is found in the periplasm. Part of the Tol-Pal system, which plays a role in outer membrane invagination during cell division and is important for maintaining outer membrane integrity. The chain is Tol-Pal system protein TolB from Brucella melitensis biotype 1 (strain ATCC 23456 / CCUG 17765 / NCTC 10094 / 16M).